The following is a 409-amino-acid chain: Tyrosine--tRNA ligase (409 aa).

Tyr-39 contributes to the L-tyrosine binding site. Positions 44 to 53 (PTAPSLHVGS) match the 'HIGH' region motif. 2 residues coordinate L-tyrosine: Tyr-176 and Gln-180. Positions 236-240 (KMGKT) match the 'KMSKS' region motif. Lys-239 is an ATP binding site. The 64-residue stretch at 346 to 409 (IGIVDALVGL…KKKHGILRKA (64 aa)) folds into the S4 RNA-binding domain.

It belongs to the class-I aminoacyl-tRNA synthetase family. TyrS type 1 subfamily. Homodimer.

It localises to the cytoplasm. The catalysed reaction is tRNA(Tyr) + L-tyrosine + ATP = L-tyrosyl-tRNA(Tyr) + AMP + diphosphate + H(+). In terms of biological role, catalyzes the attachment of tyrosine to tRNA(Tyr) in a two-step reaction: tyrosine is first activated by ATP to form Tyr-AMP and then transferred to the acceptor end of tRNA(Tyr). This Novosphingobium aromaticivorans (strain ATCC 700278 / DSM 12444 / CCUG 56034 / CIP 105152 / NBRC 16084 / F199) protein is Tyrosine--tRNA ligase.